Consider the following 464-residue polypeptide: Integrator complex subunit 12 (464 aa).

Positions G42 to A98 are disordered. Positions K69 to L84 are enriched in low complexity. The segment covering A85 to A98 has biased composition (basic and acidic residues). The PHD-type zinc-finger motif lies at G156–Q212. Disordered regions lie at residues M216 to K252 and T312 to N445. The segment covering P227–A239 has biased composition (low complexity). Polar residues predominate over residues T312–K329. Low complexity predominate over residues S339 to L371. Residues S372–K382 show a composition bias toward polar residues. Residues G384–N421 show a composition bias toward low complexity. Residues S428 to N445 are compositionally biased toward polar residues.

This sequence belongs to the Integrator subunit 12 family. In terms of assembly, component of the Integrator complex, composed of core subunits INTS1, INTS2, INTS3, INTS4, INTS5, INTS6, INTS7, INTS8, INTS9/RC74, INTS10, INTS11/CPSF3L, INTS12, INTS13, INTS14 and INTS15. The core complex associates with protein phosphatase 2A subunits PPP2CA and PPP2R1A, to form the Integrator-PP2A (INTAC) complex.

The protein resides in the nucleus. Its function is as follows. Component of the integrator complex, a multiprotein complex that terminates RNA polymerase II (Pol II) transcription in the promoter-proximal region of genes. The integrator complex provides a quality checkpoint during transcription elongation by driving premature transcription termination of transcripts that are unfavorably configured for transcriptional elongation: the complex terminates transcription by (1) catalyzing dephosphorylation of the C-terminal domain (CTD) of Pol II subunit POLR2A/RPB1 and SUPT5H/SPT5, (2) degrading the exiting nascent RNA transcript via endonuclease activity and (3) promoting the release of Pol II from bound DNA. The integrator complex is also involved in terminating the synthesis of non-coding Pol II transcripts, such as enhancer RNAs (eRNAs), small nuclear RNAs (snRNAs), telomerase RNAs and long non-coding RNAs (lncRNAs). The chain is Integrator complex subunit 12 (ints12) from Xenopus laevis (African clawed frog).